Reading from the N-terminus, the 420-residue chain is Histidine--tRNA ligase (420 aa).

This sequence belongs to the class-II aminoacyl-tRNA synthetase family. In terms of assembly, homodimer.

The protein localises to the cytoplasm. It catalyses the reaction tRNA(His) + L-histidine + ATP = L-histidyl-tRNA(His) + AMP + diphosphate + H(+). The polypeptide is Histidine--tRNA ligase (Staphylococcus aureus (strain Mu3 / ATCC 700698)).